The following is a 374-amino-acid chain: Isopentenyl-diphosphate delta-isomerase (374 aa).

Residue 13–14 participates in substrate binding; it reads RK. FMN-binding positions include 71–73, S104, and N132; that span reads GMT. Residue 104-106 coordinates substrate; sequence SQR. Q171 is a substrate binding site. Residue E172 participates in Mg(2+) binding. Residues K203, T233, 282–284, and 303–304 each bind FMN; these read GMR and AL.

This sequence belongs to the IPP isomerase type 2 family. As to quaternary structure, homooctamer. Dimer of tetramers. Requires FMN as cofactor. NADPH serves as cofactor. It depends on Mg(2+) as a cofactor.

It is found in the cytoplasm. The enzyme catalyses isopentenyl diphosphate = dimethylallyl diphosphate. Functionally, involved in the biosynthesis of isoprenoids. Catalyzes the 1,3-allylic rearrangement of the homoallylic substrate isopentenyl (IPP) to its allylic isomer, dimethylallyl diphosphate (DMAPP). The chain is Isopentenyl-diphosphate delta-isomerase from Thermococcus kodakarensis (strain ATCC BAA-918 / JCM 12380 / KOD1) (Pyrococcus kodakaraensis (strain KOD1)).